Consider the following 206-residue polypeptide: MATIHLLDDDTAVTNACAFLLESLGYDVKCWTQGADFLAQASLYQAGVVLLDMRMPVLDGQGVHDALRQCGSTLAVVFLTGHGDVPMAVEQMKRGAVDFLQKPVSVKPLQAALERALTVSSAAVARREIILCYQQLTPKERELASLVAKGFMNREIAEAMNIAVRTVEVHRARVMEKMQAGSLAELIRRFEKMASPETRIRTTYEP.

The Response regulatory domain maps to 3–117 (TIHLLDDDTA…PLQAALERAL (115 aa)). Asp-52 carries the post-translational modification 4-aspartylphosphate. The region spanning 134-194 (QQLTPKEREL…ELIRRFEKMA (61 aa)) is the HTH luxR-type domain. The H-T-H motif DNA-binding region spans 153 to 172 (NREIAEAMNIAVRTVEVHRA).

Post-translationally, phosphorylated by TtrS.

It localises to the cytoplasm. Its function is as follows. Member of the two-component regulatory system TtrR/TtrS, which is required for synthesis of tetrathionate reductase. Positively regulates transcription of the ttrBCA operon. During mice infection, the ability to use tetrathionate as an electron acceptor is a growth advantage for S.typhimurium over the competing microbiota in the lumen of the inflamed gut. This is Tetrathionate response regulatory protein TtrR (ttrR) from Salmonella typhimurium (strain LT2 / SGSC1412 / ATCC 700720).